Reading from the N-terminus, the 349-residue chain is S-adenosylmethionine:tRNA ribosyltransferase-isomerase (349 aa).

It belongs to the QueA family. Monomer.

It is found in the cytoplasm. It catalyses the reaction 7-aminomethyl-7-carbaguanosine(34) in tRNA + S-adenosyl-L-methionine = epoxyqueuosine(34) in tRNA + adenine + L-methionine + 2 H(+). It functions in the pathway tRNA modification; tRNA-queuosine biosynthesis. Its function is as follows. Transfers and isomerizes the ribose moiety from AdoMet to the 7-aminomethyl group of 7-deazaguanine (preQ1-tRNA) to give epoxyqueuosine (oQ-tRNA). The polypeptide is S-adenosylmethionine:tRNA ribosyltransferase-isomerase (Pseudomonas putida (strain GB-1)).